Reading from the N-terminus, the 330-residue chain is Class III chitinase ARB_03514 (330 aa).

The first 22 residues, 1–22 (MSSVKNILSFVALFAGVKTAYA), serve as a signal peptide directing secretion. A GH18 domain is found at 23–314 (GLNSPGHNNV…SAVKGALSAG (292 aa)). N-linked (GlcNAc...) asparagine glycans are attached at residues Asn61 and Asn135. Catalysis depends on Glu155, which acts as the Proton donor. N-linked (GlcNAc...) asparagine glycans are attached at residues Asn278 and Asn302.

It belongs to the glycosyl hydrolase 18 family. Chitinase class III subfamily. Monomer.

The protein localises to the secreted. The catalysed reaction is Random endo-hydrolysis of N-acetyl-beta-D-glucosaminide (1-&gt;4)-beta-linkages in chitin and chitodextrins.. In terms of biological role, secreted chitinase involved in the degradation of chitin, a component of the cell walls of fungi and exoskeletal elements of some animals (including worms and arthropods). Plays a morphogenetic role during apical growth, cell division and differentiation (cell wall morphogenesis). This Arthroderma benhamiae (strain ATCC MYA-4681 / CBS 112371) (Trichophyton mentagrophytes) protein is Class III chitinase ARB_03514.